A 177-amino-acid chain; its full sequence is Nucleoside triphosphate/diphosphate phosphatase (177 aa).

R23 functions as the Proton donor in the catalytic mechanism. Mg(2+)-binding residues include N87, D103, D105, D107, D120, and E123.

Belongs to the Ntdp family. The cofactor is Mg(2+).

The catalysed reaction is a ribonucleoside 5'-triphosphate + H2O = a ribonucleoside 5'-diphosphate + phosphate + H(+). The enzyme catalyses a ribonucleoside 5'-diphosphate + H2O = a ribonucleoside 5'-phosphate + phosphate + H(+). In terms of biological role, has nucleoside phosphatase activity towards nucleoside triphosphates and nucleoside diphosphates. This chain is Nucleoside triphosphate/diphosphate phosphatase, found in Streptococcus thermophilus (strain ATCC BAA-491 / LMD-9).